The sequence spans 489 residues: Cobyric acid synthase (489 aa).

The GATase cobBQ-type domain occupies 254 to 442 (ARVIAVPVLP…VHGLFADDRQ (189 aa)). C336 serves as the catalytic Nucleophile. The active site involves H434.

The protein belongs to the CobB/CobQ family. CobQ subfamily.

It participates in cofactor biosynthesis; adenosylcobalamin biosynthesis. Functionally, catalyzes amidations at positions B, D, E, and G on adenosylcobyrinic A,C-diamide. NH(2) groups are provided by glutamine, and one molecule of ATP is hydrogenolyzed for each amidation. This is Cobyric acid synthase from Methylobacterium nodulans (strain LMG 21967 / CNCM I-2342 / ORS 2060).